We begin with the raw amino-acid sequence, 510 residues long: GMP synthase [glutamine-hydrolyzing] (510 aa).

Residues 5-195 enclose the Glutamine amidotransferase type-1 domain; that stretch reads LVIVLDFGGQ…LFNIADLSAD (191 aa). Residue Cys82 is the Nucleophile of the active site. Catalysis depends on residues His169 and Glu171. The GMPS ATP-PPase domain maps to 196 to 385; the sequence is WTMGSYIEET…LGLHREIVER (190 aa). 223–229 is a binding site for ATP; that stretch reads SGGIDST.

As to quaternary structure, homodimer.

It catalyses the reaction XMP + L-glutamine + ATP + H2O = GMP + L-glutamate + AMP + diphosphate + 2 H(+). It functions in the pathway purine metabolism; GMP biosynthesis; GMP from XMP (L-Gln route): step 1/1. Its function is as follows. Catalyzes the synthesis of GMP from XMP. This chain is GMP synthase [glutamine-hydrolyzing], found in Natranaerobius thermophilus (strain ATCC BAA-1301 / DSM 18059 / JW/NM-WN-LF).